The primary structure comprises 358 residues: Triacylglycerol lipase (358 aa).

An N-terminal signal peptide occupies residues 1–39; it reads MVRSMRSRVAARAVAWALAVMPLAGAAGLTMAASPAAVA. The 280-residue stretch at 48 to 327 folds into the AB hydrolase-1 domain; it reads YPVILVHGLA…TSYHWNHLDE (280 aa). Position 56 (L56) interacts with substrate. S126 functions as the Nucleophile in the catalytic mechanism. Q127 contributes to the substrate binding site. An intrachain disulfide couples C229 to C308. D280 lines the Ca(2+) pocket. Active-site charge relay system residues include D302 and H324. Residues D326, Q330, and V334 each contribute to the Ca(2+) site.

It belongs to the AB hydrolase superfamily. Pseudomonas lipase family. Monomer. Interacts with lipase-specific foldase Lif. Requires Ca(2+) as cofactor.

The protein resides in the secreted. It catalyses the reaction a triacylglycerol + H2O = a diacylglycerol + a fatty acid + H(+). In terms of biological role, catalyzes the hydrolysis of triacylglycerol. This Burkholderia plantarii protein is Triacylglycerol lipase.